Consider the following 321-residue polypeptide: NADPH-dependent codeinone reductase 1-5 (321 aa).

Residues threonine 27 and aspartate 51 each coordinate NADPH. Active-site proton donor residues include tyrosine 56 and histidine 119. Histidine 119 lines the substrate pocket. NADPH-binding residues include glutamine 187, serine 214, leucine 216, serine 264, and arginine 269.

It belongs to the aldo/keto reductase family. As to expression, latex secreting cells (laticifer cells). Expressed constitutively and ubiquitously with highest levels in capsules.

It is found in the cytoplasm. It localises to the cytosol. The enzyme catalyses codeine + NADP(+) = codeinone + NADPH + H(+). It catalyses the reaction neopine + NADP(+) = neopinone + NADPH + H(+). It carries out the reaction morphine + NADP(+) = morphinone + NADPH + H(+). The catalysed reaction is neomorphine + NADP(+) = neomorphinone + NADPH + H(+). Its pathway is alkaloid biosynthesis; morphine biosynthesis. Functionally, NADPH-dependent codeinone reductase involved in biosynthesis of morphinan-type benzylisoquinoline and opiate alkaloids natural products. Reduces codeinone to codeine in the penultimate step in morphine biosynthesis. Can use morphinone, hydrocodone and hydromorphone as substrate during reductive reaction with NADPH as cofactor, and morphine and dihydrocodeine as substrate during oxidative reaction with NADP as cofactor. Converts morphinone to morphine, and neomorphinone to neomorphine. Reduces irreversibly neopinone, a spontaneous isomer of codeinone, to neopine; in planta, neopine levels are limited to low levels. The protein is NADPH-dependent codeinone reductase 1-5 of Papaver somniferum (Opium poppy).